The sequence spans 668 residues: DNA mismatch repair protein MutL (668 aa).

Belongs to the DNA mismatch repair MutL/HexB family.

Its function is as follows. This protein is involved in the repair of mismatches in DNA. It is required for dam-dependent methyl-directed DNA mismatch repair. May act as a 'molecular matchmaker', a protein that promotes the formation of a stable complex between two or more DNA-binding proteins in an ATP-dependent manner without itself being part of a final effector complex. This Limosilactobacillus reuteri (strain DSM 20016) (Lactobacillus reuteri) protein is DNA mismatch repair protein MutL.